The following is a 245-amino-acid chain: tRNA (guanine-N(1)-)-methyltransferase (245 aa).

Residues G111 and I131 to L136 contribute to the S-adenosyl-L-methionine site.

Belongs to the RNA methyltransferase TrmD family. Homodimer.

It localises to the cytoplasm. It catalyses the reaction guanosine(37) in tRNA + S-adenosyl-L-methionine = N(1)-methylguanosine(37) in tRNA + S-adenosyl-L-homocysteine + H(+). In terms of biological role, specifically methylates guanosine-37 in various tRNAs. The sequence is that of tRNA (guanine-N(1)-)-methyltransferase from Staphylococcus haemolyticus (strain JCSC1435).